Consider the following 460-residue polypeptide: MLQIHNSLTRRKETFTPMEPGRVRMYVCGMTVYDYCHLGHARVLVVFDVVYRYLKALGFDVTYIRNITDIDDKIIRRAAENGEDIRALTDRFIAAMHEDAEALGVLPPSAEPRATEHIDGMLAMIGTLVERGYAYAGDNGDVYYAVAKFEPYGRLSGKRLEDLRAGERVAPDEAKRDPLDFVLWKAAKPGEPAWDSPWGPGRPGWHIECSAMSTHYLGNHFDIHGGGQDLQFPHHENEIAQSEAATCEHFVNYWMHNGFVRVNEEKMSKSLGNFFTVREVLARYPAEVVRYFILSSHYRSPLNYSDEPLDAARAGLTRLYTALRGVQAVDPAGQGEGYRRRFQAAMDDDFNTPVAMAVLFDIARELNRLRDEDPAGAAPLAGLLRELGGMLGLLAGDPEAFLKGGEAGDLDEAAIEALIAQRLAARKAKDFAEADRIRDELAGQGVVLEDGPGGTTWRRG.

Residue C28 coordinates Zn(2+). A 'HIGH' region motif is present at residues 30 to 40; it reads MTVYDYCHLGH. Positions 209, 234, and 238 each coordinate Zn(2+). The 'KMSKS' region motif lies at 266 to 270; sequence KMSKS. K269 serves as a coordination point for ATP.

It belongs to the class-I aminoacyl-tRNA synthetase family. As to quaternary structure, monomer. Zn(2+) is required as a cofactor.

The protein localises to the cytoplasm. It catalyses the reaction tRNA(Cys) + L-cysteine + ATP = L-cysteinyl-tRNA(Cys) + AMP + diphosphate. This chain is Cysteine--tRNA ligase, found in Thioalkalivibrio sulfidiphilus (strain HL-EbGR7).